The chain runs to 301 residues: Cuticle collagen 2 (301 aa).

A signal peptide spans 1–37 (MDIDARIKAYKFVAYSAVTFSVVAVVSVFITLPMVYN). Triple-helical region stretches follow at residues 105–134 (GPPGPGGSPGKPGKPGKPGAPGAPGNPGKG), 153–176 (GPPGPAGPAGPPGPPGPDGNPGSP), 183–212 (GPAGPPGPAGPAGNDGAPGAPGGPGEPGAS), and 215–282 (GGPG…KGIC). Positions 109–284 (PGGSPGKPGK…GEGEKGICPK (176 aa)) are disordered. 2 stretches are compositionally biased toward pro residues: residues 143–170 (TQPPCQPCPGGPPGPAGPAGPPGPPGPD) and 179–191 (PSGPGPAGPPGPA). Gly residues predominate over residues 201–218 (GAPGGPGEPGASEQGGPG). The segment covering 219 to 229 (EPGPAGPPGPA) has biased composition (pro residues). Low complexity predominate over residues 252–261 (PGAAGAPGAD). Residues 262–274 (GNPGGPGTAGKPG) show a composition bias toward gly residues.

The protein belongs to the cuticular collagen family. As to quaternary structure, collagen polypeptide chains are complexed within the cuticle by disulfide bonds and other types of covalent cross-links. Syncytial dorsal and ventral epidermis.

In terms of biological role, nematode cuticles are composed largely of collagen-like proteins. The cuticle functions both as an exoskeleton and as a barrier to protect the worm from its environment. This chain is Cuticle collagen 2 (col-2), found in Caenorhabditis elegans.